A 168-amino-acid polypeptide reads, in one-letter code: Mediator of RNA polymerase II transcription subunit 7a (168 aa).

2 coiled-coil regions span residues 64–92 (KDSN…ADVL) and 132–166 (IMEL…LTLD).

The protein belongs to the Mediator complex subunit 7 family. As to quaternary structure, component of the Mediator complex. Interacts with MEE14/CBP1.

Its subcellular location is the nucleus. Functionally, component of the Mediator complex, a coactivator involved in the regulated transcription of nearly all RNA polymerase II-dependent genes. Mediator functions as a bridge to convey information from gene-specific regulatory proteins to the basal RNA polymerase II transcription machinery. The Mediator complex, having a compact conformation in its free form, is recruited to promoters by direct interactions with regulatory proteins and serves for the assembly of a functional pre-initiation complex with RNA polymerase II and the general transcription factors. The chain is Mediator of RNA polymerase II transcription subunit 7a (MED7A) from Arabidopsis thaliana (Mouse-ear cress).